The sequence spans 400 residues: Argininosuccinate synthase (400 aa).

Ala-8–Ser-16 provides a ligand contact to ATP. Residue Tyr-87 participates in L-citrulline binding. Gly-117 provides a ligand contact to ATP. L-aspartate-binding residues include Thr-119, Asn-123, and Asp-124. Asn-123 provides a ligand contact to L-citrulline. Arg-127, Ser-175, Glu-260, and Tyr-272 together coordinate L-citrulline.

This sequence belongs to the argininosuccinate synthase family. Type 1 subfamily. Homotetramer.

Its subcellular location is the cytoplasm. It carries out the reaction L-citrulline + L-aspartate + ATP = 2-(N(omega)-L-arginino)succinate + AMP + diphosphate + H(+). It functions in the pathway amino-acid biosynthesis; L-arginine biosynthesis; L-arginine from L-ornithine and carbamoyl phosphate: step 2/3. This is Argininosuccinate synthase from Mycobacterium sp. (strain JLS).